The primary structure comprises 694 residues: MAPGSRSWGAVLLLAAMLPAACGSCGADGGPLEPFDALYASGVEAYYGGDFAGAARCLEQALRSRRELRAERLRCRRRCRGQVRLAALGAGPAGELPFFGALLRRAGCLRSCEEPRLGAASRHRAAEEVRSDFQRRVPYSYLQRAYIQLNKLEEAANAAHTFFMANPEHMEIQQDIENYKTTAGKVSLIDLEAKPHMEDYSAGVRHYDKEEYGLAITFLERALEGYYAEDEDCQIMCEGPQRFEEHEYLEYKAGLYEAIADHYMQVLACKHDCIRELATRSGRISPIENFLPLHYDYLQFAYYRVGDYVKALECARSYLLFHPDDEDVLENAAYYEGLLEGTVDPATIKPRKEAKALLRRHKLESHLLRVAAVGLGFTYTEPNYWKRYGARQDEHSVPSSISSEPEDGPRLSLTKKPTPKPDRELKEGGPLLYSDVKFVYNSQQLNGTQRVLLDNVISEEQCRELHRVASGIMLAGDGYRGKTSPHTPNERFEGATVLKALKYGYEGRVPLKSARLFYDISEKARRIVESYFMLNSTLYFSYTHLVCRTALSGQQERRNDLSHPIHADNCLLDPEANECWKEPPAYTFRDYSALLYMNADFEGGEFIFTEMDAKTVTASIKPKCGRMVSFSSGGENPHGVKAVTKGQRCAVALWFTLDPLYRELERIQADEVIAMLDQEHVGRSEMNINPKDEL.

The N-terminal stretch at 1–23 (MAPGSRSWGAVLLLAAMLPAACG) is a signal peptide. 4 TPR repeats span residues 35 to 68 (FDAL…RREL), 136 to 169 (RVPY…NPEH), 196 to 229 (HMED…YYAE), and 292 to 325 (PLHY…HPDD). A coiled-coil region spans residues 386–418 (KRYGARQDEHSVPSSISSEPEDGPRLSLTKKPT). Positions 395–427 (HSVPSSISSEPEDGPRLSLTKKPTPKPDRELKE) are disordered. N-linked (GlcNAc...) asparagine glycosylation is found at Asn446 and Asn535. Residues 543–657 (THLVCRTALS…RCAVALWFTL (115 aa)) form the Fe2OG dioxygenase domain. The Fe cation site is built by His566, Asp568, and His638. Arg648 is an active-site residue. Positions 691 to 694 (KDEL) match the Prevents secretion from ER motif.

It belongs to the leprecan family. Fe cation serves as cofactor. The cofactor is L-ascorbate.

It is found in the endoplasmic reticulum. It localises to the sarcoplasmic reticulum. The protein resides in the golgi apparatus. It carries out the reaction L-prolyl-[collagen] + 2-oxoglutarate + O2 = trans-3-hydroxy-L-prolyl-[collagen] + succinate + CO2. Functionally, prolyl 3-hydroxylase that catalyzes the post-translational formation of 3-hydroxyproline on collagens. Contributes to proline 3-hydroxylation of collagen COL4A1 and COL1A1 in tendons, the eye sclera and in the eye lens capsule. Has high activity with the type IV collagen COL4A1, and lower activity with COL1A1. Catalyzes hydroxylation of the first Pro in Gly-Pro-Hyp sequences where Hyp is 4-hydroxyproline. Has no activity on substrates that lack 4-hydroxyproline in the third position. In Gallus gallus (Chicken), this protein is Prolyl 3-hydroxylase 2.